A 108-amino-acid chain; its full sequence is Abdominal ganglion neuropeptide R3-14 (108 aa).

The first 23 residues, 1–23 (MQVLHLCLAVSIAVALLSQAAWS), serve as a signal peptide directing secretion. Pyrrolidone carboxylic acid (Glu); partial is present on residues Glu-24 and Glu-52. Gln-66 carries the pyrrolidone carboxylic acid modification.

In terms of processing, the partial formation of pyroglutamate from N-terminal glutamic acid in peptides isolated from single cells is detected by mass spectrometry. There are indications this modification depends on a heat sensitive factor. As to expression, neurons R3-R14. A cluster of 12 giant neurons located on the right side of the abdominal ganglion.

It is found in the secreted. Its function is as follows. HRBP is a myoactive peptide that excites Aplysia heart and enhances gut motility in vitro. This is Abdominal ganglion neuropeptide R3-14 from Aplysia californica (California sea hare).